Here is a 386-residue protein sequence, read N- to C-terminus: Innexin unc-9 (386 aa).

4 helical membrane-spanning segments follow: residues 33–53, 103–123, 197–217, and 282–302; these read TAIITVFAILVSAKQYVGFPI, QWVPFVLALEALLFYVPTIVW, FLYISVKILYTVNIVGQIFLL, and IFLFLWFWYFLLAGATLCSLF.

The protein belongs to the pannexin family. In terms of assembly, heterooligomer of unc-7 and unc-9. Interacts with F-actin. Expressed in PLM neurons (at protein level). Expressed in the nerve ring.

The protein localises to the cell membrane. The protein resides in the cell junction. It localises to the gap junction. Its function is as follows. Structural component of gap junctions. Plays a role in maintaining gap junction activity to promote locomotion. The sequence is that of Innexin unc-9 from Caenorhabditis elegans.